The primary structure comprises 388 residues: Norsolorinic acid reductase (388 aa).

Catalysis depends on Y74, which acts as the Proton donor. 233–243 contributes to the NADP(+) binding site; that stretch reads GVLGRGQFRSA.

Belongs to the aldo/keto reductase family. Aldo/keto reductase 2 subfamily.

Its pathway is mycotoxin biosynthesis; aflatoxin biosynthesis. The chain is Norsolorinic acid reductase (norA) from Aspergillus flavus (strain ATCC 200026 / FGSC A1120 / IAM 13836 / NRRL 3357 / JCM 12722 / SRRC 167).